Here is a 356-residue protein sequence, read N- to C-terminus: Tyrosine recombinase XerS (356 aa).

The Core-binding (CB) domain occupies 16-121 (IMPWYVLEYY…ALSSLFKYLT (106 aa)). Positions 169 to 354 (EFLEYIDCEY…VNDEQKNALD (186 aa)) constitute a Tyr recombinase domain. Residues Arg-210, Lys-234, His-306, Arg-309, and His-332 contribute to the active site. Tyr-341 acts as the O-(3'-phospho-DNA)-tyrosine intermediate in catalysis.

Belongs to the 'phage' integrase family. XerS subfamily.

It is found in the cytoplasm. FtsK is required for recombination. In terms of biological role, site-specific tyrosine recombinase, which acts by catalyzing the cutting and rejoining of the recombining DNA molecules. Essential to convert dimers of the bacterial chromosome into monomers to permit their segregation at cell division. In Streptococcus agalactiae serotype Ia (strain ATCC 27591 / A909 / CDC SS700), this protein is Tyrosine recombinase XerS.